Consider the following 189-residue polypeptide: Potassium-transporting ATPase KdpC subunit (189 aa).

A helical transmembrane segment spans residues 10–30 (ITLVFCVFFSVFYILILWLFA).

Belongs to the KdpC family. As to quaternary structure, the system is composed of three essential subunits: KdpA, KdpB and KdpC.

Its subcellular location is the cell inner membrane. Functionally, part of the high-affinity ATP-driven potassium transport (or Kdp) system, which catalyzes the hydrolysis of ATP coupled with the electrogenic transport of potassium into the cytoplasm. This subunit acts as a catalytic chaperone that increases the ATP-binding affinity of the ATP-hydrolyzing subunit KdpB by the formation of a transient KdpB/KdpC/ATP ternary complex. This chain is Potassium-transporting ATPase KdpC subunit, found in Bacteroides thetaiotaomicron (strain ATCC 29148 / DSM 2079 / JCM 5827 / CCUG 10774 / NCTC 10582 / VPI-5482 / E50).